We begin with the raw amino-acid sequence, 48 residues long: U1-theraphotoxin-Agm1a (48 aa).

3 cysteine pairs are disulfide-bonded: cysteine 4–cysteine 34, cysteine 8–cysteine 40, and cysteine 22–cysteine 45. A Methionine sulfoxide; partial modification is found at methionine 44.

The protein belongs to the neurotoxin 12 (Hwtx-2) family. 01 (Ap1a) subfamily. Expressed by the venom gland.

It localises to the secreted. In terms of biological role, is toxic to both insects and mammals. Induces reversible paralysis when injected into S.frugiperda larvae. Reduces both the amplitude and frequency of responses from muscle (GF-TTM and GF-DLM) pathways in the D.melanogaster giant fiber circuit, suggesting an action at the neuromuscular junction, which is mediated by glutamatergic receptors. In mice, intracranial injection of 30 ug causes increased urination, myoclonus, hypermotility with circular movements followed by respiratory and generalized seizures resulting in death within 25-35 minutes of injection. This is U1-theraphotoxin-Agm1a from Acanthoscurria gomesiana (Tarantula spider).